The chain runs to 393 residues: MNVPATREDLMIVNMGPHHPSMHGVLRLIVTLDGEDVIDCEPILGYLHRGMEKIAENRTIIQYLPYVTRWDYLATMFTEAITVNAPEQLGNIQVPKRASYIRVIMLELSRIASHLLWLGPFMADIGAQTPFFYIFRERELVYDLFEAATGMRMMHNYFRIGGVAADLPHGWIDKCLDFCDYFLTGVAEYQKLITRNPIFLERVEGVGIIGVEEAINWGLSGPMLRASGIQWDLRKVDHYECYDEFDWEVQWQKEGDSLSRYLVRIGEMVASIKIIQQALEGIPGGPYENLEIRCFDRARDPELNDFEYRFISKKPSPTFELSKQELYVRVEAPKGELGIFLIGDQNVFPWRWKIRPPGFINLQILPQLVKRMKLADIMTILGSIDIIMGEVDR.

The protein belongs to the complex I 49 kDa subunit family. As to quaternary structure, NDH is composed of at least 16 different subunits, 5 of which are encoded in the nucleus.

Its subcellular location is the plastid. It is found in the chloroplast thylakoid membrane. It carries out the reaction a plastoquinone + NADH + (n+1) H(+)(in) = a plastoquinol + NAD(+) + n H(+)(out). The enzyme catalyses a plastoquinone + NADPH + (n+1) H(+)(in) = a plastoquinol + NADP(+) + n H(+)(out). NDH shuttles electrons from NAD(P)H:plastoquinone, via FMN and iron-sulfur (Fe-S) centers, to quinones in the photosynthetic chain and possibly in a chloroplast respiratory chain. The immediate electron acceptor for the enzyme in this species is believed to be plastoquinone. Couples the redox reaction to proton translocation, and thus conserves the redox energy in a proton gradient. The sequence is that of NAD(P)H-quinone oxidoreductase subunit H, chloroplastic from Vitis vinifera (Grape).